Consider the following 490-residue polypeptide: Betaine aldehyde dehydrogenase (490 aa).

K(+)-binding residues include threonine 26, isoleucine 27, and aspartate 93. Glycine 150–tryptophan 152 is an NAD(+) binding site. The active-site Charge relay system is lysine 162. Lysine 176 to glutamate 179 is an NAD(+) binding site. Valine 180 serves as a coordination point for K(+). Glycine 230–serine 233 is an NAD(+) binding site. Position 246 (leucine 246) interacts with K(+). Catalysis depends on glutamate 252, which acts as the Proton acceptor. NAD(+) contacts are provided by glycine 254, cysteine 286, and glutamate 387. The active-site Nucleophile is cysteine 286. A Cysteine sulfenic acid (-SOH) modification is found at cysteine 286. K(+) contacts are provided by lysine 457 and glycine 460. Residue glutamate 464 is the Charge relay system of the active site.

Belongs to the aldehyde dehydrogenase family. Dimer of dimers. Requires K(+) as cofactor.

It carries out the reaction betaine aldehyde + NAD(+) + H2O = glycine betaine + NADH + 2 H(+). It functions in the pathway amine and polyamine biosynthesis; betaine biosynthesis via choline pathway; betaine from betaine aldehyde: step 1/1. Its function is as follows. Involved in the biosynthesis of the osmoprotectant glycine betaine. Catalyzes the irreversible oxidation of betaine aldehyde to the corresponding acid. The protein is Betaine aldehyde dehydrogenase of Escherichia coli O6:K15:H31 (strain 536 / UPEC).